We begin with the raw amino-acid sequence, 196 residues long: Serine/arginine-rich splicing factor RSZ22A (196 aa).

The RRM domain occupies serine 2–asparagine 71. Serine 48 bears the Phosphoserine mark. Positions valine 58 to histidine 70 are enriched in basic and acidic residues. Residues valine 58–serine 196 form a disordered region. Gly residues predominate over residues arginine 72–glycine 87. Over residues glycine 88 to glutamate 100 the composition is skewed to basic and acidic residues. A CCHC-type zinc finger spans residues leucine 96–serine 113. The span at glycine 119–lysine 135 shows a compositional bias: basic residues. Residues serine 136, serine 144, serine 146, serine 151, serine 159, serine 170, and serine 196 each carry the phosphoserine modification. Residues tyrosine 139 to alanine 149 are compositionally biased toward low complexity.

It belongs to the splicing factor SR family. RSZ subfamily. In terms of assembly, component of the spliceosome. In terms of processing, extensively phosphorylated on serine residues in the RS domain.

The protein resides in the nucleus. Its function is as follows. Probably involved in intron recognition and spliceosome assembly. This Arabidopsis thaliana (Mouse-ear cress) protein is Serine/arginine-rich splicing factor RSZ22A (RSZ22A).